The following is a 684-amino-acid chain: Glycine--tRNA ligase beta subunit (684 aa).

This sequence belongs to the class-II aminoacyl-tRNA synthetase family. As to quaternary structure, tetramer of two alpha and two beta subunits.

It localises to the cytoplasm. It carries out the reaction tRNA(Gly) + glycine + ATP = glycyl-tRNA(Gly) + AMP + diphosphate. The polypeptide is Glycine--tRNA ligase beta subunit (Ectopseudomonas mendocina (strain ymp) (Pseudomonas mendocina)).